A 354-amino-acid chain; its full sequence is UDP-N-acetylglucosamine--N-acetylmuramyl-(pentapeptide) pyrophosphoryl-undecaprenol N-acetylglucosamine transferase 1 (354 aa).

Residues 12–14 (TAG), R163, S193, and Q287 contribute to the UDP-N-acetyl-alpha-D-glucosamine site.

The protein belongs to the glycosyltransferase 28 family. MurG subfamily.

The protein localises to the cell membrane. The catalysed reaction is di-trans,octa-cis-undecaprenyl diphospho-N-acetyl-alpha-D-muramoyl-L-alanyl-D-glutamyl-meso-2,6-diaminopimeloyl-D-alanyl-D-alanine + UDP-N-acetyl-alpha-D-glucosamine = di-trans,octa-cis-undecaprenyl diphospho-[N-acetyl-alpha-D-glucosaminyl-(1-&gt;4)]-N-acetyl-alpha-D-muramoyl-L-alanyl-D-glutamyl-meso-2,6-diaminopimeloyl-D-alanyl-D-alanine + UDP + H(+). Its pathway is cell wall biogenesis; peptidoglycan biosynthesis. Its function is as follows. Cell wall formation. Catalyzes the transfer of a GlcNAc subunit on undecaprenyl-pyrophosphoryl-MurNAc-pentapeptide (lipid intermediate I) to form undecaprenyl-pyrophosphoryl-MurNAc-(pentapeptide)GlcNAc (lipid intermediate II). The sequence is that of UDP-N-acetylglucosamine--N-acetylmuramyl-(pentapeptide) pyrophosphoryl-undecaprenol N-acetylglucosamine transferase 1 from Bacillus thuringiensis (strain Al Hakam).